The chain runs to 667 residues: Acyl-coenzyme A oxidase acox-3 (667 aa).

Residues 138-141, 146-147, glycine 178, arginine 313, 334-337, and glycine 410 each bind FAD; these read FCLT, GS, and QQYR. Glutamate 433 acts as the Proton acceptor in catalysis. FAD is bound at residue glutamate 435. The short motif at 665–667 is the Microbody targeting signal element; the sequence is SKL.

It belongs to the acyl-CoA oxidase family. Homodimer. FAD is required as a cofactor. As to expression, expressed in intestine.

The protein resides in the peroxisome. The catalysed reaction is IC-asc-C7-CoA + O2 = IC-asc-DeltaC7-CoA + H2O2. It carries out the reaction IC-asc-C9-CoA + O2 = IC-asc-DeltaC9-CoA + H2O2. The enzyme catalyses asc-C13-CoA + O2 = asc-DeltaC13-CoA + H2O2. Its pathway is lipid metabolism; peroxisomal fatty acid beta-oxidation. In contrast to other acyl-coenzyme A oxidases which bind to and are activated by ATP, does not bind ATP. Its function is as follows. Involved in the first step of peroxisomal beta-oxidation by catalyzing the desaturation of fatty acid-derived side chains of ascaroside pheromones, which regulates development and behavior. Specifically, shortens indol-3-carbonyl(IC)-ascarosides with 7-carbon (IC-asc-C7) or 9-carbon (IC-asc-C9) side chains and contributes to the shortening of ascarosides with 13-carbon (asc-C13) and 15-carbon (asc-C15) side chains. The sequence is that of Acyl-coenzyme A oxidase acox-3 from Caenorhabditis elegans.